A 131-amino-acid polypeptide reads, in one-letter code: Small ribosomal subunit protein uS11 (131 aa).

The protein belongs to the universal ribosomal protein uS11 family. Part of the 30S ribosomal subunit. Interacts with proteins S7 and S18. Binds to IF-3.

Located on the platform of the 30S subunit, it bridges several disparate RNA helices of the 16S rRNA. Forms part of the Shine-Dalgarno cleft in the 70S ribosome. The protein is Small ribosomal subunit protein uS11 of Geobacter metallireducens (strain ATCC 53774 / DSM 7210 / GS-15).